The sequence spans 399 residues: Glutathione-independent formaldehyde dehydrogenase (399 aa).

Residue Cys47 participates in Zn(2+) binding. NAD(+)-binding residues include Gly48, Ser49, and His52. His68, Cys98, Cys101, Cys104, Cys112, and Asp170 together coordinate Zn(2+). Positions 198, 218, 223, 263, 268, 300, 338, and 339 each coordinate NAD(+).

Belongs to the zinc-containing alcohol dehydrogenase family. In terms of assembly, homotetramer. It depends on Zn(2+) as a cofactor.

It carries out the reaction formaldehyde + NAD(+) + H2O = formate + NADH + 2 H(+). The catalysed reaction is acetaldehyde + NAD(+) + H2O = acetate + NADH + 2 H(+). Its function is as follows. Dehydrogenase that catalyzes the NAD(+)-dependent oxidation of formaldehyde and acetaldehyde. Shows no detectable activity against either aldehydes with longer carbon chains or ethanol. The chain is Glutathione-independent formaldehyde dehydrogenase from Pseudomonas aeruginosa (strain LESB58).